The chain runs to 165 residues: Thiol peroxidase (165 aa).

Residues 18-164 (RKVGDKAPNF…YEAAIEAAKK (147 aa)) enclose the Thioredoxin domain. Cysteine 60 acts as the Cysteine sulfenic acid (-SOH) intermediate in catalysis. The cysteines at positions 60 and 94 are disulfide-linked.

The protein belongs to the peroxiredoxin family. Tpx subfamily. As to quaternary structure, homodimer.

The catalysed reaction is a hydroperoxide + [thioredoxin]-dithiol = an alcohol + [thioredoxin]-disulfide + H2O. Its function is as follows. Thiol-specific peroxidase that catalyzes the reduction of hydrogen peroxide and organic hydroperoxides to water and alcohols, respectively. Plays a role in cell protection against oxidative stress by detoxifying peroxides. The polypeptide is Thiol peroxidase (Listeria innocua serovar 6a (strain ATCC BAA-680 / CLIP 11262)).